The following is a 311-amino-acid chain: Methionyl-tRNA formyltransferase (311 aa).

Residue 110–113 participates in (6S)-5,6,7,8-tetrahydrofolate binding; the sequence is SLLP.

This sequence belongs to the Fmt family.

It carries out the reaction L-methionyl-tRNA(fMet) + (6R)-10-formyltetrahydrofolate = N-formyl-L-methionyl-tRNA(fMet) + (6S)-5,6,7,8-tetrahydrofolate + H(+). Its function is as follows. Attaches a formyl group to the free amino group of methionyl-tRNA(fMet). The formyl group appears to play a dual role in the initiator identity of N-formylmethionyl-tRNA by promoting its recognition by IF2 and preventing the misappropriation of this tRNA by the elongation apparatus. The polypeptide is Methionyl-tRNA formyltransferase (Streptococcus equi subsp. zooepidemicus (strain H70)).